The chain runs to 358 residues: Isopentenyl-diphosphate delta-isomerase (358 aa).

Substrate is bound at residue 12–13 (RK). FMN-binding positions include 69 to 71 (AMT), S99, and N128. Q158 is a binding site for substrate. E159 is a binding site for Mg(2+). Residues K190, T220, 267-269 (GIR), and 288-289 (AG) contribute to the FMN site.

This sequence belongs to the IPP isomerase type 2 family. Homooctamer. Dimer of tetramers. FMN serves as cofactor. NADPH is required as a cofactor. Requires Mg(2+) as cofactor.

The protein resides in the cytoplasm. It carries out the reaction isopentenyl diphosphate = dimethylallyl diphosphate. In terms of biological role, involved in the biosynthesis of isoprenoids. Catalyzes the 1,3-allylic rearrangement of the homoallylic substrate isopentenyl (IPP) to its allylic isomer, dimethylallyl diphosphate (DMAPP). This Listeria monocytogenes serotype 4b (strain CLIP80459) protein is Isopentenyl-diphosphate delta-isomerase.